Consider the following 90-residue polypeptide: uncharacterized protein (90 aa).

A signal peptide spans M1–G20.

This is an uncharacterized protein from Homo sapiens (Human).